The sequence spans 318 residues: Coproporphyrin III ferrochelatase (318 aa).

2 residues coordinate Fe(2+): His186 and Glu268.

Belongs to the ferrochelatase family.

The protein resides in the cytoplasm. The enzyme catalyses Fe-coproporphyrin III + 2 H(+) = coproporphyrin III + Fe(2+). Its pathway is porphyrin-containing compound metabolism; protoheme biosynthesis. Involved in coproporphyrin-dependent heme b biosynthesis. Catalyzes the insertion of ferrous iron into coproporphyrin III to form Fe-coproporphyrin III. The sequence is that of Coproporphyrin III ferrochelatase from Lactococcus lactis subsp. cremoris (strain MG1363).